A 371-amino-acid chain; its full sequence is Chaperone protein DnaJ (371 aa).

Residues 5 to 70 enclose the J domain; sequence DYYEVLGVNR…QKRAAYDQYG (66 aa). The tract at residues 31–52 is disordered; that stretch reads KYHPDRNPDNPKAEESFKEAKE. Residues 32–52 show a composition bias toward basic and acidic residues; it reads YHPDRNPDNPKAEESFKEAKE. The CR-type zinc finger occupies 132–210; that stretch reads RTETKIRIPV…CQGAGRVKKH (79 aa). Residues cysteine 145, cysteine 148, cysteine 162, cysteine 165, cysteine 184, cysteine 187, cysteine 198, and cysteine 201 each coordinate Zn(2+). CXXCXGXG motif repeat units lie at residues 145–152, 162–169, 184–191, and 198–205; these read CETCHGSG, CTTCGGHG, CPKCHGSG, and CPSCQGAG.

The protein belongs to the DnaJ family. Homodimer. Zn(2+) serves as cofactor.

Its subcellular location is the cytoplasm. Its function is as follows. Participates actively in the response to hyperosmotic and heat shock by preventing the aggregation of stress-denatured proteins and by disaggregating proteins, also in an autonomous, DnaK-independent fashion. Unfolded proteins bind initially to DnaJ; upon interaction with the DnaJ-bound protein, DnaK hydrolyzes its bound ATP, resulting in the formation of a stable complex. GrpE releases ADP from DnaK; ATP binding to DnaK triggers the release of the substrate protein, thus completing the reaction cycle. Several rounds of ATP-dependent interactions between DnaJ, DnaK and GrpE are required for fully efficient folding. Also involved, together with DnaK and GrpE, in the DNA replication of plasmids through activation of initiation proteins. The chain is Chaperone protein DnaJ from Methylovorus sp. (strain SS1 / DSM 11726).